The primary structure comprises 321 residues: Lipoyl synthase (321 aa).

The [4Fe-4S] cluster site is built by Cys-68, Cys-73, Cys-79, Cys-94, Cys-98, Cys-101, and Ser-308. Residues 80-297 form the Radical SAM core domain; sequence FNHGTATFMI…KVLADELGFT (218 aa).

Belongs to the radical SAM superfamily. Lipoyl synthase family. [4Fe-4S] cluster serves as cofactor.

The protein localises to the cytoplasm. It catalyses the reaction [[Fe-S] cluster scaffold protein carrying a second [4Fe-4S](2+) cluster] + N(6)-octanoyl-L-lysyl-[protein] + 2 oxidized [2Fe-2S]-[ferredoxin] + 2 S-adenosyl-L-methionine + 4 H(+) = [[Fe-S] cluster scaffold protein] + N(6)-[(R)-dihydrolipoyl]-L-lysyl-[protein] + 4 Fe(3+) + 2 hydrogen sulfide + 2 5'-deoxyadenosine + 2 L-methionine + 2 reduced [2Fe-2S]-[ferredoxin]. The protein operates within protein modification; protein lipoylation via endogenous pathway; protein N(6)-(lipoyl)lysine from octanoyl-[acyl-carrier-protein]: step 2/2. In terms of biological role, catalyzes the radical-mediated insertion of two sulfur atoms into the C-6 and C-8 positions of the octanoyl moiety bound to the lipoyl domains of lipoate-dependent enzymes, thereby converting the octanoylated domains into lipoylated derivatives. In Shewanella denitrificans (strain OS217 / ATCC BAA-1090 / DSM 15013), this protein is Lipoyl synthase.